The following is a 907-amino-acid chain: Aldehyde oxidoreductase (907 aa).

One can recognise a 2Fe-2S ferredoxin-type domain in the interval 2–79; sequence IQKVITVNGI…GAQITTIEGV (78 aa). Residues Cys-40, Cys-45, Cys-48, Cys-60, Cys-100, Cys-103, Cys-137, and Cys-139 each coordinate [2Fe-2S] cluster. Mo-molybdopterin cytosine dinucleotide is bound by residues His-653 and Glu-869.

Belongs to the xanthine dehydrogenase family. As to quaternary structure, homodimer. The cofactor is Mo-molybdopterin cytosine dinucleotide. Requires [2Fe-2S] cluster as cofactor.

It carries out the reaction an aldehyde + A + H2O = a carboxylate + AH2 + H(+). This is Aldehyde oxidoreductase (mop) from Megalodesulfovibrio gigas (Desulfovibrio gigas).